Here is a 297-residue protein sequence, read N- to C-terminus: Homoserine kinase (297 aa).

Residue 82-92 (PLTRGLGSSAS) participates in ATP binding.

The protein belongs to the GHMP kinase family. Homoserine kinase subfamily.

Its subcellular location is the cytoplasm. It carries out the reaction L-homoserine + ATP = O-phospho-L-homoserine + ADP + H(+). Its pathway is amino-acid biosynthesis; L-threonine biosynthesis; L-threonine from L-aspartate: step 4/5. Catalyzes the ATP-dependent phosphorylation of L-homoserine to L-homoserine phosphate. This Bacillus mycoides (strain KBAB4) (Bacillus weihenstephanensis) protein is Homoserine kinase.